The chain runs to 118 residues: uncharacterized protein (118 aa).

3 helical membrane-spanning segments follow: residues 17–37, 60–80, and 90–110; these read IIIIFYVITSMVQGNYHFAIL, INYTIIGTIIGQYTVLIIMIF, and YIEQILTTNLSIVGYAFGSFW.

It is found in the membrane. This is an uncharacterized protein from Acanthamoeba polyphaga mimivirus (APMV).